A 246-amino-acid chain; its full sequence is NLP effector protein 2 (246 aa).

The signal sequence occupies residues 1–19; sequence MKFVVFLCAIAAVVATIQG. The Conserved undecapeptide motif I signature appears at 113–123; sequence AIMYSWYFPKD. A Hepta-peptide GHRHDWE motif II motif is present at residues 130–136; that stretch reads GHRHDWE.

It belongs to the Necrosis inducing protein (NPP1) family.

The protein resides in the secreted. Functionally, secreted effector that contributes strongly to virulence during infection by P.capsici. Causes large necrotic areas in both host C.annuum and non-host N.benthamiana. This Phytophthora capsici protein is NLP effector protein 2.